Here is a 424-residue protein sequence, read N- to C-terminus: Translation initiation factor 2 subunit gamma (424 aa).

The 198-residue stretch at 23 to 220 (LPEVNIGLVG…AIEETIPTPE (198 aa)) folds into the tr-type G domain. Positions 32 to 39 (GHVDHGKT) are G1. Asp35, Thr39, Gly60, and Ser62 together coordinate Mg(2+). 35–40 (DHGKTT) is a GTP binding site. Residues 60-64 (GISIK) are G2. The tract at residues 107 to 110 (DSPG) is G3. Residues 163–166 (NKID) and 198–200 (SAQ) contribute to the GTP site. The G4 stretch occupies residues 163 to 166 (NKID). The interval 198-200 (SAQ) is G5.

This sequence belongs to the TRAFAC class translation factor GTPase superfamily. Classic translation factor GTPase family. EIF2G subfamily. In terms of assembly, heterotrimer composed of an alpha, a beta and a gamma chain. Mg(2+) is required as a cofactor.

The catalysed reaction is GTP + H2O = GDP + phosphate + H(+). EIF-2 functions in the early steps of protein synthesis by forming a ternary complex with GTP and initiator tRNA. The sequence is that of Translation initiation factor 2 subunit gamma from Archaeoglobus fulgidus (strain ATCC 49558 / DSM 4304 / JCM 9628 / NBRC 100126 / VC-16).